A 296-amino-acid polypeptide reads, in one-letter code: Urease accessory protein UreD (296 aa).

This sequence belongs to the UreD family. UreD, UreF and UreG form a complex that acts as a GTP-hydrolysis-dependent molecular chaperone, activating the urease apoprotein by helping to assemble the nickel containing metallocenter of UreC. The UreE protein probably delivers the nickel.

It localises to the cytoplasm. Required for maturation of urease via the functional incorporation of the urease nickel metallocenter. The polypeptide is Urease accessory protein UreD (Methylibium petroleiphilum (strain ATCC BAA-1232 / LMG 22953 / PM1)).